The primary structure comprises 957 residues: Exoribonuclease II, mitochondrial (957 aa).

The transit peptide at 1 to 54 (MNYRQLFLLQNVNLESNYLLKRVCLSLKLSPCKLTRKFHHACPSSSKVLKYFRI) directs the protein to the mitochondrion. Positions 503–843 (RVDLRHLKAF…FTHHQIQSVL (341 aa)) constitute an RNB domain.

The protein belongs to the RNR ribonuclease family.

Its subcellular location is the mitochondrion. The enzyme catalyses Exonucleolytic cleavage in the 3'- to 5'-direction to yield nucleoside 5'-phosphates.. Functionally, required for intron-independent turnover and processing of mitochondrial RNA. Participates in 3'-mtRNA processing where it hydrolyzes single-stranded RNA or partially double-stranded RNA with 3'-single-stranded tails. The chain is Exoribonuclease II, mitochondrial (rpm1) from Schizosaccharomyces pombe (strain 972 / ATCC 24843) (Fission yeast).